Here is a 456-residue protein sequence, read N- to C-terminus: Probable multidrug resistance protein NorM (456 aa).

Transmembrane regions (helical) follow at residues 13–34 (QFLT…MTFF), 54–76 (SSFW…PIIA), 95–117 (LYIA…PTIL), 132–154 (HFLN…RSFI), 161–183 (RVTM…CFIF), 193–215 (GAGS…VILI), 244–266 (IGVP…TILM), 286–308 (LLYA…ETGA), 321–343 (GMAA…RDII), 358–380 (MHFL…VLGA), 387–409 (VTVT…GYGL), and 414–436 (LGPF…ILSI).

It belongs to the multi antimicrobial extrusion (MATE) (TC 2.A.66.1) family.

Its subcellular location is the cell membrane. Multidrug efflux pump. The protein is Probable multidrug resistance protein NorM (norM) of Listeria monocytogenes serotype 4b (strain F2365).